Reading from the N-terminus, the 341-residue chain is Glycerol-3-phosphate dehydrogenase [NAD(P)+] 1 (341 aa).

Positions 17, 18, 37, and 112 each coordinate NADPH. 2 residues coordinate sn-glycerol 3-phosphate: Lys112 and Gly140. Residue Ala144 participates in NADPH binding. Sn-glycerol 3-phosphate-binding residues include Lys195, Asp248, Ser258, Arg259, and Asn260. Lys195 functions as the Proton acceptor in the catalytic mechanism. Arg259 lines the NADPH pocket. The NADPH site is built by Val283 and Glu285.

It belongs to the NAD-dependent glycerol-3-phosphate dehydrogenase family.

The protein resides in the cytoplasm. The catalysed reaction is sn-glycerol 3-phosphate + NAD(+) = dihydroxyacetone phosphate + NADH + H(+). The enzyme catalyses sn-glycerol 3-phosphate + NADP(+) = dihydroxyacetone phosphate + NADPH + H(+). Its pathway is membrane lipid metabolism; glycerophospholipid metabolism. Catalyzes the reduction of the glycolytic intermediate dihydroxyacetone phosphate (DHAP) to sn-glycerol 3-phosphate (G3P), the key precursor for phospholipid synthesis. This is Glycerol-3-phosphate dehydrogenase [NAD(P)+] 1 from Mycobacterium bovis (strain ATCC BAA-935 / AF2122/97).